The following is an 82-amino-acid chain: uncharacterized protein (82 aa).

A 2Fe-2S ferredoxin-type domain is found at 1–82 (MKIHLIRHNT…HVESDIEIDL (82 aa)). C35, C40, C43, and C72 together coordinate [2Fe-2S] cluster.

[2Fe-2S] cluster is required as a cofactor.

This is an uncharacterized protein from Haemophilus influenzae (strain ATCC 51907 / DSM 11121 / KW20 / Rd).